The primary structure comprises 128 residues: Aspartate 1-decarboxylase (128 aa).

S25 (schiff-base intermediate with substrate; via pyruvic acid) is an active-site residue. S25 is subject to Pyruvic acid (Ser). Residue T57 coordinates substrate. Y58 serves as the catalytic Proton donor. 73 to 75 lines the substrate pocket; that stretch reads GSA.

The protein belongs to the PanD family. Heterooctamer of four alpha and four beta subunits. It depends on pyruvate as a cofactor. In terms of processing, is synthesized initially as an inactive proenzyme, which is activated by self-cleavage at a specific serine bond to produce a beta-subunit with a hydroxyl group at its C-terminus and an alpha-subunit with a pyruvoyl group at its N-terminus.

The protein localises to the cytoplasm. It catalyses the reaction L-aspartate + H(+) = beta-alanine + CO2. It participates in cofactor biosynthesis; (R)-pantothenate biosynthesis; beta-alanine from L-aspartate: step 1/1. Catalyzes the pyruvoyl-dependent decarboxylation of aspartate to produce beta-alanine. The protein is Aspartate 1-decarboxylase of Paraburkholderia phytofirmans (strain DSM 17436 / LMG 22146 / PsJN) (Burkholderia phytofirmans).